A 122-amino-acid polypeptide reads, in one-letter code: Cupin 2 conserved barrel domain-containing protein (122 aa).

The segment at 55–119 (PGGVTTAEDH…DSPVEIVSIW (65 aa)) is cupin 2 conserved barrel. Zn(2+) is bound by residues aspartate 63, histidine 65, glutamate 69, and histidine 103.

Zn(2+) serves as cofactor.

The catalysed reaction is N(6)-hydroxy-L-lysine + L-glutamate + ATP = 1-L-glutamo-2-N(6-)L-lysinohydrazine + AMP + diphosphate + 2 H(+). Inhibited by 1,10-phenanthroline (OP). Its function is as follows. Catalyzes hydrazine (N-N) bond formation from an unstable ester intermediate, the product of the ATP-dependent condensation of L-N(6)-OH-lysine and L-glutamine substrates by a methionyl-tRNA synthase-like protein. The chain is Cupin 2 conserved barrel domain-containing protein from Rhodococcus jostii (strain RHA1).